Here is a 511-residue protein sequence, read N- to C-terminus: 2,3-bisphosphoglycerate-independent phosphoglycerate mutase (511 aa).

Asp12 is a Mn(2+) binding site. Tyr36 carries the phosphotyrosine modification. Ser62 provides a ligand contact to Mn(2+). The Phosphoserine intermediate role is filled by Ser62. Substrate-binding positions include His123, 153–154, Arg185, Arg191, 261–264, and Lys336; these read RD and RPDR. Mn(2+) contacts are provided by Asp403, His407, Asp444, His445, and His462.

Belongs to the BPG-independent phosphoglycerate mutase family. Monomer. It depends on Mn(2+) as a cofactor.

It carries out the reaction (2R)-2-phosphoglycerate = (2R)-3-phosphoglycerate. The protein operates within carbohydrate degradation; glycolysis; pyruvate from D-glyceraldehyde 3-phosphate: step 3/5. In terms of biological role, essential for rapid growth and for sporulation. Catalyzes the interconversion of 2-phosphoglycerate and 3-phosphoglycerate. In Bacillus velezensis (strain DSM 23117 / BGSC 10A6 / LMG 26770 / FZB42) (Bacillus amyloliquefaciens subsp. plantarum), this protein is 2,3-bisphosphoglycerate-independent phosphoglycerate mutase.